The primary structure comprises 171 residues: MSAPLIVLVGPMGVGKSTVGQLLAERLGTGYRDTDEDIVTAQGRAIAEIFVDEGEAAFRTLEKEAVRTALAEHEGVLALGGGAILDADTRALLAGQRVVYLSMDVEEAVKRTGLNAARPLLAVNPRKQWRELMEARRHLYEDVATAVVATDGRTPEEVTQAALDAVELKEA.

13–18 lines the ATP pocket; that stretch reads GVGKST. Ser17 contacts Mg(2+). Residues Asp35, Arg59, and Gly81 each coordinate substrate. Arg118 is an ATP binding site. Arg136 serves as a coordination point for substrate. Residue Arg153 coordinates ATP.

It belongs to the shikimate kinase family. Monomer. Mg(2+) is required as a cofactor.

It localises to the cytoplasm. It catalyses the reaction shikimate + ATP = 3-phosphoshikimate + ADP + H(+). It functions in the pathway metabolic intermediate biosynthesis; chorismate biosynthesis; chorismate from D-erythrose 4-phosphate and phosphoenolpyruvate: step 5/7. Catalyzes the specific phosphorylation of the 3-hydroxyl group of shikimic acid using ATP as a cosubstrate. The protein is Shikimate kinase of Streptomyces coelicolor (strain ATCC BAA-471 / A3(2) / M145).